The primary structure comprises 392 residues: S-adenosylmethionine synthase (392 aa).

Position 17 (His17) interacts with ATP. Position 19 (Asp19) interacts with Mg(2+). Glu45 contributes to the K(+) binding site. L-methionine-binding residues include Glu58 and Gln102. The flexible loop stretch occupies residues 102–112; it reads QSADIAQGVDA. Residues 169–171, 235–236, Asp244, 250–251, Ala267, and Lys271 contribute to the ATP site; these read DAK, KF, and RK. Asp244 provides a ligand contact to L-methionine. Lys275 contributes to the L-methionine binding site.

Belongs to the AdoMet synthase family. As to quaternary structure, homotetramer; dimer of dimers. Mg(2+) is required as a cofactor. It depends on K(+) as a cofactor.

It localises to the cytoplasm. The enzyme catalyses L-methionine + ATP + H2O = S-adenosyl-L-methionine + phosphate + diphosphate. Its pathway is amino-acid biosynthesis; S-adenosyl-L-methionine biosynthesis; S-adenosyl-L-methionine from L-methionine: step 1/1. Functionally, catalyzes the formation of S-adenosylmethionine (AdoMet) from methionine and ATP. The overall synthetic reaction is composed of two sequential steps, AdoMet formation and the subsequent tripolyphosphate hydrolysis which occurs prior to release of AdoMet from the enzyme. In Methylobacterium nodulans (strain LMG 21967 / CNCM I-2342 / ORS 2060), this protein is S-adenosylmethionine synthase.